Reading from the N-terminus, the 143-residue chain is Ribulose bisphosphate carboxylase large chain (143 aa).

Positions 1-2 (MS) are excised as a propeptide. P3 carries the post-translational modification N-acetylproline. K14 is modified (N6,N6,N6-trimethyllysine). X123 contacts substrate.

It belongs to the RuBisCO large chain family. Type I subfamily. As to quaternary structure, heterohexadecamer of 8 large chains and 8 small chains.

It is found in the plastid. It localises to the chloroplast. The enzyme catalyses 2 (2R)-3-phosphoglycerate + 2 H(+) = D-ribulose 1,5-bisphosphate + CO2 + H2O. It catalyses the reaction D-ribulose 1,5-bisphosphate + O2 = 2-phosphoglycolate + (2R)-3-phosphoglycerate + 2 H(+). RuBisCO catalyzes two reactions: the carboxylation of D-ribulose 1,5-bisphosphate, the primary event in carbon dioxide fixation, as well as the oxidative fragmentation of the pentose substrate in the photorespiration process. Both reactions occur simultaneously and in competition at the same active site. The polypeptide is Ribulose bisphosphate carboxylase large chain (rbcL) (Nemopanthus mucronatus (Catberry)).